Here is a 349-residue protein sequence, read N- to C-terminus: Anthranilate phosphoribosyltransferase (349 aa).

5-phospho-alpha-D-ribose 1-diphosphate is bound by residues glycine 82, 85 to 86, 92 to 95, 110 to 118, and serine 122; these read GD, NVST, and KHGNRAVSG. Glycine 82 serves as a coordination point for anthranilate. Serine 94 contributes to the Mg(2+) binding site. Asparagine 113 contributes to the anthranilate binding site. Anthranilate is bound at residue arginine 168. Residues aspartate 227 and glutamate 228 each coordinate Mg(2+).

This sequence belongs to the anthranilate phosphoribosyltransferase family. Homodimer. It depends on Mg(2+) as a cofactor.

The enzyme catalyses N-(5-phospho-beta-D-ribosyl)anthranilate + diphosphate = 5-phospho-alpha-D-ribose 1-diphosphate + anthranilate. It functions in the pathway amino-acid biosynthesis; L-tryptophan biosynthesis; L-tryptophan from chorismate: step 2/5. In terms of biological role, catalyzes the transfer of the phosphoribosyl group of 5-phosphorylribose-1-pyrophosphate (PRPP) to anthranilate to yield N-(5'-phosphoribosyl)-anthranilate (PRA). The polypeptide is Anthranilate phosphoribosyltransferase (Pseudomonas fluorescens (strain SBW25)).